A 564-amino-acid chain; its full sequence is Keratin, type II cytoskeletal 6C (564 aa).

Residues 1 to 11 are compositionally biased toward low complexity; that stretch reads MASTSTTIRSH. A disordered region spans residues 1–23; that stretch reads MASTSTTIRSHSSSRRGFSANSA. Ala2 carries the N-acetylalanine modification. The segment at 2–162 is head; it reads ASTSTTIRSH…DPAIQRVRAE (161 aa). At Ser60 the chain carries Phosphoserine. Residues 163-198 are coil 1A; the sequence is EREQIKTLNNKFASFIDKVRFLEQQNKVLDTKWTLL. Positions 163-476 constitute an IF rod domain; that stretch reads EREQIKTLNN…KLLEGEECRL (314 aa). A linker 1 region spans residues 199–217; that stretch reads QEQGTKTVRQNLEPLFEQY. Positions 218 to 309 are coil 1B; that stretch reads INNLRRQLDS…ALYDAELSQM (92 aa). Residues 310–333 form a linker 12 region; the sequence is QTHISDTSVVLSMDNNRNLDLDSI. The coil 2 stretch occupies residues 334-472; the sequence is IAEVKAQYEE…ATYRKLLEGE (139 aa). The tail stretch occupies residues 473–564; it reads ECRLNGEGVG…SSSSRKSYKH (92 aa).

The protein belongs to the intermediate filament family. As to quaternary structure, heterodimer of a type I and a type II keratin. KRT6 isomers associate with KRT16 and/or KRT17. Constitutively expressed in distinct types of epithelia such as those in oral mucosa, esophagus, papillae of tongue and hair follicle outer root sheath.

The chain is Keratin, type II cytoskeletal 6C (KRT6C) from Homo sapiens (Human).